Consider the following 424-residue polypeptide: Probable serine/threonine-protein kinase PBL15 (424 aa).

Residues 99 to 380 (FSGNYLLGEG…AVVEALESLI (282 aa)) form the Protein kinase domain. Residues 105-113 (LGEGGFGKV) and Lys134 contribute to the ATP site. Tyr179 carries the post-translational modification Phosphotyrosine. Catalysis depends on Asp229, which acts as the Proton acceptor. Ser233 is subject to Phosphoserine. 2 positions are modified to phosphothreonine: Thr264 and Thr269. Residue Tyr277 is modified to Phosphotyrosine. The interval 390–424 (GHWPLSPKSQGGKVSPKVRGDHRSGRKSAPGSLRS) is disordered.

It belongs to the protein kinase superfamily. Ser/Thr protein kinase family. Interacts with the Xanthomonas campestris effector XopAC/AvrAC.

Its subcellular location is the cell membrane. It carries out the reaction L-seryl-[protein] + ATP = O-phospho-L-seryl-[protein] + ADP + H(+). It catalyses the reaction L-threonyl-[protein] + ATP = O-phospho-L-threonyl-[protein] + ADP + H(+). Functionally, may be involved in plant defense signaling. The polypeptide is Probable serine/threonine-protein kinase PBL15 (Arabidopsis thaliana (Mouse-ear cress)).